The chain runs to 475 residues: DNA-binding protein D-ETS-6 (475 aa).

The tract at residues 42–150 (SIGSGNETKL…VSPVEVPVDP (109 aa)) is disordered. Low complexity predominate over residues 70–108 (SSSSTSDSSASSYSSTDSDSGSSTSSSSIRSQLPALNLP). The span at 109–121 (VPLPLATPTPPAV) shows a compositional bias: pro residues. A compositionally biased stretch (low complexity) spans 122–144 (SSPHQAPSPRRNSSDSNRSVSPV). The PNT domain maps to 132 to 219 (RNSSDSNRSV…QHFAISLYHA (88 aa)). Residues 255–335 (IQLWQFLLEL…HGKRYAYKFD (81 aa)) constitute a DNA-binding region (ETS). The interval 350-475 (GDPASSMLGS…PVTPTTNAFN (126 aa)) is disordered. The span at 375–388 (PPLHHHPQHSHPHH) shows a compositional bias: basic residues. Residues 401 to 436 (SSPASNSSSLGFPSSSTASSQASPGQAPASSSASTS) are compositionally biased toward low complexity. Polar residues predominate over residues 453 to 475 (RTSTSSAGNYDQGPVTPTTNAFN).

Belongs to the ETS family. As to expression, embryonic ventral nervous system and 1 pair of neurons in each thoracic segment.

It localises to the nucleus. In Drosophila melanogaster (Fruit fly), this protein is DNA-binding protein D-ETS-6 (Ets21C).